Here is a 613-residue protein sequence, read N- to C-terminus: Ribosome-associated molecular chaperone SSB1 (613 aa).

Ala-2 bears the N-acetylalanine mark. Residues 2-391 (AEGVFQGAIG…ILTGQSTSDE (390 aa)) are nucleotide binding domain (NBD). ATP is bound at residue 16-18 (TTY). Thr-47 is subject to Phosphothreonine. ATP is bound by residues Lys-73, 205-207 (GGT), 271-278 (ERAKRTLS), and Gly-342. The segment at 392–402 (TKDLLLLDVAP) is inter-domain linker. The segment at 403–613 (LSLGVGMQGD…RVVTKAMSSR (211 aa)) is substrate binding domain (SBD). The Contributes to ribosome binding motif lies at 428–430 (KRR). At Thr-431 the chain carries Phosphothreonine. Residues 516-612 (SEEIEKMVNQ…KRVVTKAMSS (97 aa)) form a lid domain (SBDalpha) region. The Nuclear export signal signature appears at 574–582 (IEAALSDAL). Residues 601-613 (GLKRVVTKAMSSR) are required for interaction with ribosomes.

The protein belongs to the heat shock protein 70 family. Ssb-type Hsp70 subfamily. Binds to ribosomes. Binds close to the ribosomal tunnel exit via contacts with both ribosomal proteins RPL35, RPL39 and RPL19, and rRNA. Directly interacts with nascent polypeptides. This interaction is dependent on the ribosome-associated complex (RAC). Interacts with SSE1. Interacts with FES1. Interacts with NAP1.

Its subcellular location is the cytoplasm. The enzyme catalyses ATP + H2O = ADP + phosphate + H(+). Ribosome-bound, Hsp70-type chaperone that assists in the cotranslational folding of newly synthesized proteins in the cytosol. Stimulates folding by interacting with nascent chains, binding to short, largely hydrophobic sequences exposed by unfolded proteins, thereby stabilizing longer, more slowly translated, and aggregation-prone nascent polypeptides and domains that cannot fold stably until fully synthesized. The Hsp70-protein substrate interaction depends on ATP-binding and on allosteric regulation between the NBD and the SBD. The ATP-bound state is characterized by a fast exchange rate of substrate (low affinity state), while in the ADP-bound state exchange is much slower (high affinity state). During the Hsp70 cycle, the chaperone switches between the ATP-bound state (open conformation) and the ADP-bound state (closed conformation) by major conformational rearrangements involving mainly the lid domain. Ssb cooperates with a specific Hsp40/Hsp70 co-chaperone termed the ribosome-associated complex (RAC), which stimulates the ATPase activity of the ribosome-associated pool of Ssbs and switches it to the high affinity substrate binding state. Hsp110 chaperone SSE1 and FES1 act as nucleotide exchange factors that cause substrate release. The chain is Ribosome-associated molecular chaperone SSB1 from Saccharomyces cerevisiae (strain ATCC 204508 / S288c) (Baker's yeast).